A 1545-amino-acid polypeptide reads, in one-letter code: ATP-binding cassette sub-family C member 9 (1545 aa).

At 1 to 30 (MSLSFCGNNISSYNIYHGVLQNPCFVDALN) the chain is on the extracellular side. Asn9 is a glycosylation site (N-linked (GlcNAc...) asparagine). The helical transmembrane segment at 31 to 51 (LVPHVFLLFITFPILFIGWGS) threads the bilayer. Over 52 to 72 (QSSKVQIHHNTWLHFPGHNLR) the chain is Cytoplasmic. The chain crosses the membrane as a helical span at residues 73–93 (WILTFALLFVHVCEIAEGIVS). The Extracellular portion of the chain corresponds to 94–101 (DSQRASRH). A helical transmembrane segment spans residues 102 to 122 (LHLFMPAVMGFVATTTSIVYY). Residues 123–132 (HNIETSNFPK) lie on the Cytoplasmic side of the membrane. A helical membrane pass occupies residues 133–153 (LLLALFLYWVMAFITKTIKLV). The Extracellular segment spans residues 154-167 (KYWQLGWGMSDLRF). The helical transmembrane segment at 168 to 188 (CITGVMVILNGLLMAVEINVI) threads the bilayer. Over 189–301 (RVRRYVFFMN…AFGRPILLSS (113 aa)) the chain is Cytoplasmic. The ABC transmembrane type-1 1 domain maps to 297–594 (ILLSSTFRYL…LSTVVRFAVK (298 aa)). Residues 302–322 (TFRYLADLLGFAGPLCISGIV) traverse the membrane as a helical segment. Over 323–347 (QRVNEPKNNTTRFSETLSSKEFLEN) the chain is Extracellular. N-linked (GlcNAc...) asparagine glycosylation is found at Asn330 and Asn331. A helical membrane pass occupies residues 348 to 368 (AHVLAVLLFLALILQRTFLQA). The Cytoplasmic segment spans residues 369-420 (SYYVTIETGINLRGALLAMIYNKILRLSTSNLSMGEMTLGQINNLVAIETNQ). Residues 421–441 (LMWFLFLCPNLWAMPVQIIMG) form a helical membrane-spanning segment. Topologically, residues 442–452 (VILLYNLLGSS) are extracellular. The chain crosses the membrane as a helical span at residues 453–473 (ALVGAAVIVLLAPIQYFIATK). The Cytoplasmic portion of the chain corresponds to 474–528 (LAEAQKSTLDYSTERLKKTNEILKGIKLLKLYAWEHIFCKSVEETRMKELSSLKT). Residues 529 to 549 (FALYTSLSIFMNAAIPIAAVL) traverse the membrane as a helical segment. The Extracellular portion of the chain corresponds to 550–568 (ATFVTHAYASGNNLKPAEA). The chain crosses the membrane as a helical span at residues 569-589 (FASLSLFHILVTPLFLLSTVV). Topologically, residues 590–986 (RFAVKAIISV…TCWWYLTSGG (397 aa)) are cytoplasmic. Positions 668–908 (IKVTNGYFSW…DVELYEHWKT (241 aa)) constitute an ABC transporter 1 domain. ATP is bound at residue 701–708 (GQVGCGKS). The tract at residues 940-963 (REAKAQMEDEDEEEEEEEDEDDNM) is disordered. Acidic residues predominate over residues 947-962 (EDEDEEEEEEEDEDDN). Residues 987-1007 (FFLLFLMIFSKLLKHSVIVAI) traverse the membrane as a helical segment. Residues 990–1270 (LFLMIFSKLL…VVRNLADLEV (281 aa)) enclose the ABC transmembrane type-1 2 domain. At 1008–1030 (DYWLATWTSEYSINDPGKADQTF) the chain is on the extracellular side. Residues 1031–1051 (YVAGFSILCGAGIFLCLVTSL) form a helical membrane-spanning segment. Topologically, residues 1052-1123 (TVEWMGLTAA…TLLCLSAIGM (72 aa)) are cytoplasmic. A helical transmembrane segment spans residues 1124-1144 (ISYATPVFLIALAPLGVAFYF). At 1145 to 1241 (IQKYFRVASK…IASISGSSNS (97 aa)) the chain is on the extracellular side. Residues 1242–1262 (GLVGLGLLYALTITNYLNWVV) form a helical membrane-spanning segment. Residues 1263–1545 (RNLADLEVQM…LFSTLVMTNK (283 aa)) lie on the Cytoplasmic side of the membrane. An ABC transporter 2 domain is found at 1308 to 1542 (IKIHDLCVRY…KNGLFSTLVM (235 aa)). Residue 1342–1349 (GRTGSGKS) participates in ATP binding.

Belongs to the ABC transporter superfamily. ABCC family. Conjugate transporter (TC 3.A.1.208) subfamily. As to quaternary structure, interacts with KCNJ11. Interacts with KCNJ8. As to expression, expressed at high levels in heart, skeletal muscle and ovary. Moderate levels are found in brain, tongue and pancreatic islets. Low levels are found in lung, testis and adrenal gland. Expressed at very low levels in stomach, colon, thyroid and pituitary.

The protein resides in the membrane. In terms of biological role, subunit of ATP-sensitive potassium channels (KATP). Can form cardiac and smooth muscle-type KATP channels with KCNJ11. KCNJ11 forms the channel pore while ABCC9 is required for activation and regulation. Can form a sulfonylurea-sensitive but ATP-insensitive potassium channel with KCNJ8. The sequence is that of ATP-binding cassette sub-family C member 9 (Abcc9) from Rattus norvegicus (Rat).